We begin with the raw amino-acid sequence, 547 residues long: MAAKEVRFGDAARSAVITGVNVLADAVKVTLGPKGRNVVLERSYGAPTITKDGVSVAKEIELKDKFENMGAQMVKEVASKTSDTAGDGTTTATVLAQAIVKEGMRYVAAGMNPMDLKRGIEKAVSAAVEELKKLSKPCSTSKEIAQVGSISANSDAEIGRIIAEAMDKVGKEGVITVEDGSGLENELDVVEGMQFDRGYLSPYFVSSAEKQIAALENPFILLHDKKISNIRDLLPILEQVAKAGKPLLIIAEDVDGEALATLVVNNIRGILKTCAVKAPGFGDRRKAMLEDIAILTGGTVIAEEVGLSLEKAKLEDLGQAKRVEVGKENTTIIDGAGDTKAIEARVTQIRKQIEEATSDYDREKLQERVAKLAGGVALIKVGAATEMEMKEKKARVEDAFHATRAAVEEGIVPGGGVALLRTIDAVSKAKGDNHDQDSGIKIVLRALEEPLRQIVTNCGDEASVVVNKVKEGKGNFGYNAATGEYGDLVAMGVLDPTKVTRSALQNASSVAGLILTTDAMVAELPKEDSPGAGAGMGGMGGMGGMDM.

Residues 30–33, Lys51, 87–91, Gly415, 479–481, and Asp495 contribute to the ATP site; these read TLGP, DGTTT, and NAA. The tract at residues 525–547 is disordered; the sequence is PKEDSPGAGAGMGGMGGMGGMDM. The segment covering 532-547 has biased composition (gly residues); sequence AGAGMGGMGGMGGMDM.

The protein belongs to the chaperonin (HSP60) family. As to quaternary structure, forms a cylinder of 14 subunits composed of two heptameric rings stacked back-to-back. Interacts with the co-chaperonin GroES.

The protein resides in the cytoplasm. The enzyme catalyses ATP + H2O + a folded polypeptide = ADP + phosphate + an unfolded polypeptide.. In terms of biological role, together with its co-chaperonin GroES, plays an essential role in assisting protein folding. The GroEL-GroES system forms a nano-cage that allows encapsulation of the non-native substrate proteins and provides a physical environment optimized to promote and accelerate protein folding. The chain is Chaperonin GroEL from Nitrosomonas eutropha (strain DSM 101675 / C91 / Nm57).